Reading from the N-terminus, the 537-residue chain is Bifunctional purine biosynthesis protein PurH (537 aa).

The 151-residue stretch at Ile-8–Thr-158 folds into the MGS-like domain.

It belongs to the PurH family.

The catalysed reaction is (6R)-10-formyltetrahydrofolate + 5-amino-1-(5-phospho-beta-D-ribosyl)imidazole-4-carboxamide = 5-formamido-1-(5-phospho-D-ribosyl)imidazole-4-carboxamide + (6S)-5,6,7,8-tetrahydrofolate. The enzyme catalyses IMP + H2O = 5-formamido-1-(5-phospho-D-ribosyl)imidazole-4-carboxamide. It functions in the pathway purine metabolism; IMP biosynthesis via de novo pathway; 5-formamido-1-(5-phospho-D-ribosyl)imidazole-4-carboxamide from 5-amino-1-(5-phospho-D-ribosyl)imidazole-4-carboxamide (10-formyl THF route): step 1/1. Its pathway is purine metabolism; IMP biosynthesis via de novo pathway; IMP from 5-formamido-1-(5-phospho-D-ribosyl)imidazole-4-carboxamide: step 1/1. The polypeptide is Bifunctional purine biosynthesis protein PurH (Chelativorans sp. (strain BNC1)).